A 298-amino-acid chain; its full sequence is GTPase Era (298 aa).

Positions 3–170 (KSGFVAILGR…IKLLTDNLEE (168 aa)) constitute an Era-type G domain. Residues 11-18 (GRPNVGKS) are G1. 11-18 (GRPNVGKS) is a GTP binding site. The interval 37 to 41 (QTTRN) is G2. The tract at residues 58–61 (DTPG) is G3. Residues 58–62 (DTPGI) and 120–123 (NKID) contribute to the GTP site. The G4 stretch occupies residues 120 to 123 (NKID). A G5 region spans residues 149 to 151 (ISA). Residues 201–279 (TQQEVPHSVA…YLETWVKVKK (79 aa)) form the KH type-2 domain.

It belongs to the TRAFAC class TrmE-Era-EngA-EngB-Septin-like GTPase superfamily. Era GTPase family. Monomer.

It localises to the cytoplasm. The protein localises to the cell membrane. An essential GTPase that binds both GDP and GTP, with rapid nucleotide exchange. Plays a role in 16S rRNA processing and 30S ribosomal subunit biogenesis and possibly also in cell cycle regulation and energy metabolism. The polypeptide is GTPase Era (Streptococcus pyogenes serotype M4 (strain MGAS10750)).